We begin with the raw amino-acid sequence, 156 residues long: Single-stranded DNA-binding protein 1 (156 aa).

The 107-residue stretch at 1–107 (MNETMICAVG…IDAVAIGHDL (107 aa)) folds into the SSB domain. Residues 114 to 124 (FRRTARTEAST) show a composition bias toward low complexity. The interval 114–156 (FRRTARTEASTSPPRPEPNWEVPAGGTPGEPVPEQRPDPVPVG) is disordered.

In terms of assembly, homotetramer.

In Streptomyces coelicolor (strain ATCC BAA-471 / A3(2) / M145), this protein is Single-stranded DNA-binding protein 1 (ssb1).